Here is a 344-residue protein sequence, read N- to C-terminus: Prickle-like protein 4 (344 aa).

The PET domain maps to 1-81 (MSPQGPAVLS…ARLVLPKLEG (81 aa)). LIM zinc-binding domains lie at 82 to 147 (HTCE…LLRP) and 148 to 207 (RCPA…RYSD). The disordered stretch occupies residues 253-344 (GSSLQTQRGL…NASKTHCTMC (92 aa)). Positions 257–271 (QTQRGLPGSSPQQEN) are enriched in polar residues. Residues 272–296 (RPGDKAEAPKGQEQCRLETIRDPKD) show a composition bias toward basic and acidic residues. A compositionally biased stretch (polar residues) spans 322–344 (SWKTPGSLQAEDSNASKTHCTMC).

Belongs to the prickle / espinas / testin family. Expressed in a broad range of normal tissues as well as in hepatocellular carcinoma, breast cancer and prostate cancer tissues.

The chain is Prickle-like protein 4 (PRICKLE4) from Homo sapiens (Human).